Here is a 756-residue protein sequence, read N- to C-terminus: Ent-kaurene synthase, chloroplastic (756 aa).

Mg(2+)-binding residues include Asp507 and Asp511. The short motif at 507–511 (DDFFD) is the DDXXD motif element. The helical transmembrane segment at 606-622 (YVSFALGPIVLPCLYLV) threads the bilayer. Asn651, Thr655, and Glu659 together coordinate Mg(2+).

Belongs to the terpene synthase family. Mg(2+) is required as a cofactor. Present in both leaves and flowers.

It localises to the plastid. Its subcellular location is the chloroplast membrane. It catalyses the reaction ent-copalyl diphosphate = ent-kaur-16-ene + diphosphate. It functions in the pathway plant hormone biosynthesis; gibberellin biosynthesis. Involved in the biosynthesis of labdane-type diterpenoid including marrubiin and other labdane-related furanoid diterpenoids with potential applications as anti-diabetics, analgesics or vasorelaxants. Terpene synthase that produces ent-kaurene from ent-copalyl diphosphate (ent-CPP). The sequence is that of Ent-kaurene synthase, chloroplastic from Marrubium vulgare (White horehound).